The chain runs to 343 residues: 3-dehydroquinate synthase (343 aa).

Residues 86 to 90 (GALLD), 110 to 111 (TT), lysine 123, and lysine 132 contribute to the NAD(+) site. Zn(2+) is bound by residues glutamate 165, histidine 229, and histidine 243.

This sequence belongs to the sugar phosphate cyclases superfamily. Dehydroquinate synthase family. Co(2+) serves as cofactor. Zn(2+) is required as a cofactor. It depends on NAD(+) as a cofactor.

The protein resides in the cytoplasm. The catalysed reaction is 7-phospho-2-dehydro-3-deoxy-D-arabino-heptonate = 3-dehydroquinate + phosphate. Its pathway is metabolic intermediate biosynthesis; chorismate biosynthesis; chorismate from D-erythrose 4-phosphate and phosphoenolpyruvate: step 2/7. Functionally, catalyzes the conversion of 3-deoxy-D-arabino-heptulosonate 7-phosphate (DAHP) to dehydroquinate (DHQ). The chain is 3-dehydroquinate synthase from Pyrobaculum neutrophilum (strain DSM 2338 / JCM 9278 / NBRC 100436 / V24Sta) (Thermoproteus neutrophilus).